Reading from the N-terminus, the 106-residue chain is Large ribosomal subunit protein uL24 (106 aa).

Belongs to the universal ribosomal protein uL24 family. Part of the 50S ribosomal subunit.

One of two assembly initiator proteins, it binds directly to the 5'-end of the 23S rRNA, where it nucleates assembly of the 50S subunit. In terms of biological role, one of the proteins that surrounds the polypeptide exit tunnel on the outside of the subunit. The protein is Large ribosomal subunit protein uL24 of Paramagnetospirillum magneticum (strain ATCC 700264 / AMB-1) (Magnetospirillum magneticum).